The following is a 782-amino-acid chain: Endonuclease MutS2 (782 aa).

Position 336-343 (336-343 (GPNTGGKT)) interacts with ATP. The Smr domain maps to 707–782 (LDLRGYRYED…GFGVTVATLK (76 aa)).

The protein belongs to the DNA mismatch repair MutS family. MutS2 subfamily. As to quaternary structure, homodimer. Binds to stalled ribosomes, contacting rRNA.

Functionally, endonuclease that is involved in the suppression of homologous recombination and thus may have a key role in the control of bacterial genetic diversity. In terms of biological role, acts as a ribosome collision sensor, splitting the ribosome into its 2 subunits. Detects stalled/collided 70S ribosomes which it binds and splits by an ATP-hydrolysis driven conformational change. Acts upstream of the ribosome quality control system (RQC), a ribosome-associated complex that mediates the extraction of incompletely synthesized nascent chains from stalled ribosomes and their subsequent degradation. Probably generates substrates for RQC. The protein is Endonuclease MutS2 of Staphylococcus aureus (strain JH1).